Consider the following 204-residue polypeptide: HTH-type transcriptional repressor KstR (204 aa).

Positions 18–78 (RERRKRILDA…SALGREFERI (61 aa)) constitute an HTH tetR-type domain. Residues 41–60 (QMRAVAERADVAVGTLYRYF) constitute a DNA-binding region (H-T-H motif).

As to quaternary structure, homodimer.

In terms of biological role, controls the expression of genes used for utilizing diverse lipids as energy sources. The sequence is that of HTH-type transcriptional repressor KstR (kstR) from Mycolicibacterium smegmatis (strain ATCC 700084 / mc(2)155) (Mycobacterium smegmatis).